Here is a 765-residue protein sequence, read N- to C-terminus: Palmitoyltransferase ZDHHC8 (765 aa).

Over 1–13 (MPRSPGTRLKPAK) the chain is Cytoplasmic. The chain crosses the membrane as a helical span at residues 14–34 (YIPVATAAALLVGSSTLFFVF). Residues 35–52 (TCPWLTRAVSPAVPVYNG) are Lumenal-facing. A helical membrane pass occupies residues 53 to 73 (IIFLFVLANFSMATFMDPGVF). The Cytoplasmic portion of the chain corresponds to 74 to 148 (PRADEDEDKE…NCIGRRNYRY (75 aa)). The 51-residue stretch at 104–154 (KWCATCHFYRPPRCSHCSVCDNCVEDFDHHCPWVNNCIGRRNYRYFFLFLL) folds into the DHHC domain. Cys134 acts as the S-palmitoyl cysteine intermediate in catalysis. A helical membrane pass occupies residues 149–169 (FFLFLLSLSAHMVGVVAFGLV). At 170–190 (YVLNHAEGLGAAHTTITMAVM) the chain is on the lumenal side. A helical membrane pass occupies residues 191 to 211 (CVAGLFFIPVIGLTGFHVVLV). Residues 212–765 (TRGRTTNEHV…VGGTTYEISV (554 aa)) lie on the Cytoplasmic side of the membrane. The disordered stretch occupies residues 290 to 386 (LKAGLGRSKS…PGPDSLTLGE (97 aa)). Residues 301–311 (GSLDRLDEKPL) show a composition bias toward basic and acidic residues. Residues 333-348 (PRPSSAESALSAQRTS) show a composition bias toward polar residues. Ser337 carries the phosphoserine modification. Residue Arg441 is modified to Omega-N-methylarginine. The tract at residues 447-542 (ALQPLRSEGG…PREPSPVRYD (96 aa)) is disordered. A phosphoserine mark is found at Ser606 and Ser627. The segment at 630–747 (SLSSAVSRAP…PGPSASPARH (118 aa)) is disordered. The segment covering 639 to 655 (PRTSSSSLQADLANNNA) has biased composition (polar residues). The span at 671 to 680 (QGPPSPPSTP) shows a compositional bias: pro residues. Residues Ser675, Ser682, Ser725, and Ser743 each carry the phosphoserine modification.

Belongs to the DHHC palmitoyltransferase family. ERF2/ZDHHC9 subfamily.

Its subcellular location is the golgi apparatus membrane. The protein localises to the mitochondrion membrane. The enzyme catalyses L-cysteinyl-[protein] + hexadecanoyl-CoA = S-hexadecanoyl-L-cysteinyl-[protein] + CoA. Palmitoyltransferase that catalyzes the addition of palmitate onto various protein substrates and therefore functions in several unrelated biological processes. Through the palmitoylation of ABCA1 regulates the localization of the transporter to the plasma membrane and thereby regulates its function in cholesterol and phospholipid efflux. Could also pamitoylate the D(2) dopamine receptor DRD2 and regulate its stability and localization to the plasma membrane. Could also play a role in glutamatergic transmission. The chain is Palmitoyltransferase ZDHHC8 from Canis lupus familiaris (Dog).